The chain runs to 449 residues: MPKEDCKYWDKCYQQNPAHLSKYNHPKKQQEHEVDGAEGKKVAPKRSASSQSGEQKKEEQTEPVNKDKSNTSASSTEMVNKDTAKGSYEAETEELHKEAMSNISGKNYMEILEKRIRLSVQKEYDNLCESNEFIRHKFLVEMPPDFYEFWKFVGSLKIDPAKPKDAGLEHLDKVFQLQLVGPFEFLAGKFHGAKLGEPGDYLRHWRFYYDPPEFQTIFVRRGTGIHYGYWRDVPQDKENLLIARNDSAKGCQFQFVAGNAFDAFLYYLEHDFAATPFSCGQLAGTKKAVAKYLSDNSLELAQLDRLQRERNKRVVAKTFHRAGIVVPFDQKTEVGYRPLAVSDSELKKMLAMLERKDVDNGAAKQAVLEKLQPVANAANIAVDESDFGSALELGIDMFCSGHKELHMLASSLLVPAYSMLSRPQFIAIAKAHMEQRSREDNLSIFDVLK.

The CCHC-type zinc-finger motif lies at 3-28 (KEDCKYWDKCYQQNPAHLSKYNHPKK). Residues 18-93 (AHLSKYNHPK…AKGSYEAETE (76 aa)) form a disordered region. 2 stretches are compositionally biased toward basic and acidic residues: residues 28–41 (KQQEHEVDGAEGKK) and 54–69 (EQKKEEQTEPVNKDKS). Phosphoserine is present on Ser72. Glu384 (proton donor) is an active-site residue.

The protein belongs to the HPF1 family.

The protein localises to the chromosome. It is found in the nucleus. Cofactor for serine ADP-ribosylation that confers serine specificity on Parp. Switches the amino acid specificity of Parp from aspartate or glutamate to serine residues. Acts by completing the active site of Parp: forms a composite active site composed of residues from HPF1/CG1218 and Parp. This Drosophila melanogaster (Fruit fly) protein is Histone PARylation factor 1-like.